We begin with the raw amino-acid sequence, 72 residues long: Heat-stable enterotoxin C (72 aa).

Residues 1-19 (MKKIVFVLTLMLFSFGTLG) form the signal peptide. 3 disulfides stabilise this stretch: cysteine 60–cysteine 65, cysteine 61–cysteine 69, and cysteine 64–cysteine 72.

Belongs to the heat-stable enterotoxin family.

It is found in the secreted. Its function is as follows. Toxin which activates the particulate form of guanylate cyclase and increases cyclic GMP levels within the host intestinal epithelial cells. Highly toxic. In Yersinia enterocolitica, this protein is Heat-stable enterotoxin C (ystC).